Here is an 83-residue protein sequence, read N- to C-terminus: Cardiotoxin 7'' (83 aa).

A signal peptide spans 1–21 (MKTLLLTLVVVTIVCLDLGYT). Intrachain disulfides connect cysteine 24-cysteine 43, cysteine 36-cysteine 61, cysteine 65-cysteine 76, and cysteine 77-cysteine 82.

This sequence belongs to the three-finger toxin family. Short-chain subfamily. Orphan group XV sub-subfamily. In terms of tissue distribution, expressed by the venom gland.

It is found in the secreted. Its subcellular location is the target cell membrane. Has low cytotoxic activity. This is Cardiotoxin 7'' from Naja atra (Chinese cobra).